The primary structure comprises 295 residues: Sulfotransferase 1A1 (295 aa).

Residue 48-53 participates in 3'-phosphoadenylyl sulfate binding; that stretch reads KSGTTW. A substrate-binding site is contributed by 106–108; that stretch reads KTH. His-108 functions as the Proton acceptor in the catalytic mechanism. 3'-phosphoadenylyl sulfate is bound by residues Arg-130, Ser-138, Tyr-193, 227–232, and 255–259; these read TSFKEM and FMRKG. Ser-138 carries the post-translational modification Phosphoserine.

This sequence belongs to the sulfotransferase 1 family. As to quaternary structure, homodimer. Liver, lung, adrenal, brain, platelets and skin.

It localises to the cytoplasm. It catalyses the reaction a phenol + 3'-phosphoadenylyl sulfate = an aryl sulfate + adenosine 3',5'-bisphosphate + H(+). The catalysed reaction is 17beta-estradiol + 3'-phosphoadenylyl sulfate = 17beta-estradiol 3-sulfate + adenosine 3',5'-bisphosphate + H(+). It carries out the reaction 4-ethylphenol + 3'-phosphoadenylyl sulfate = 4-ethylphenyl sulfate + adenosine 3',5'-bisphosphate + H(+). The enzyme catalyses 4-nitrophenol + 3'-phosphoadenylyl sulfate = 4-nitrophenyl sulfate + adenosine 3',5'-bisphosphate. It catalyses the reaction dopamine + 3'-phosphoadenylyl sulfate = dopamine 3-O-sulfate + adenosine 3',5'-bisphosphate + H(+). The catalysed reaction is dopamine + 3'-phosphoadenylyl sulfate = dopamine 4-O-sulfate + adenosine 3',5'-bisphosphate + H(+). It carries out the reaction 3,3',5-triiodo-L-thyronine + 3'-phosphoadenylyl sulfate = 3,3',5-triiodo-L-thyronine sulfate + adenosine 3',5'-bisphosphate + H(+). The enzyme catalyses 3,3',5'-triiodo-L-thyronine + 3'-phosphoadenylyl sulfate = 3,3',5'-triiodo-L-thyronine sulfate + adenosine 3',5'-bisphosphate + H(+). It catalyses the reaction 3,3'-diiodo-L-thyronine + 3'-phosphoadenylyl sulfate = 3,3'-diiodo-L-thyronine sulfate + adenosine 3',5'-bisphosphate + H(+). The catalysed reaction is L-thyroxine + 3'-phosphoadenylyl sulfate = L-thyroxine sulfate + adenosine 3',5'-bisphosphate + H(+). Its function is as follows. Sulfotransferase that utilizes 3'-phospho-5'-adenylyl sulfate (PAPS) as sulfonate donor to catalyze the sulfate conjugation of a wide variety of acceptor molecules bearing a hydroxyl or an amine group. Sulfonation increases the water solubility of most compounds, and therefore their renal excretion, but it can also result in bioactivation to form active metabolites. Displays broad substrate specificity for small phenolic compounds. Plays an important role in the sulfonation of endogenous molecules such as steroid hormones. Mediates the sulfate conjugation of a variety of xenobiotics, including the drugs acetaminophen and minoxidil. Mediates also the metabolic activation of carcinogenic N-hydroxyarylamines leading to highly reactive intermediates capable of forming DNA adducts, potentially resulting in mutagenesis. May play a role in gut microbiota-host metabolic interaction. O-sulfonates 4-ethylphenol (4-EP), a dietary tyrosine-derived metabolite produced by gut bacteria. The product 4-EPS crosses the blood-brain barrier and may negatively regulate oligodendrocyte maturation and myelination, affecting the functional connectivity of different brain regions associated with the limbic system. Catalyzes the sulfate conjugation of dopamine. Catalyzes the sulfation of T4 (L-thyroxine/3,5,3',5'-tetraiodothyronine), T3 (3,5,3'-triiodothyronine), rT3 (3,3',5'-triiodothyronine) and 3,3'-T2 (3,3'-diiodothyronine), with a substrate preference of 3,3'-T2 &gt; rT3 &gt; T3 &gt; T4. This chain is Sulfotransferase 1A1 (SULT1A1), found in Homo sapiens (Human).